The sequence spans 211 residues: Large ribosomal subunit protein uL3 (211 aa).

Positions glutamine 130–serine 139 are enriched in polar residues. A disordered region spans residues glutamine 130 to threonine 151. Position 150 is an N5-methylglutamine (glutamine 150).

It belongs to the universal ribosomal protein uL3 family. In terms of assembly, part of the 50S ribosomal subunit. Forms a cluster with proteins L14 and L19. In terms of processing, methylated by PrmB.

Functionally, one of the primary rRNA binding proteins, it binds directly near the 3'-end of the 23S rRNA, where it nucleates assembly of the 50S subunit. The sequence is that of Large ribosomal subunit protein uL3 from Alcanivorax borkumensis (strain ATCC 700651 / DSM 11573 / NCIMB 13689 / SK2).